An 85-amino-acid polypeptide reads, in one-letter code: Large ribosomal subunit protein bL27 (85 aa).

A disordered region spans residues 1–20 (MAHKKAGGSSRNGRDSEAKR).

Belongs to the bacterial ribosomal protein bL27 family.

This is Large ribosomal subunit protein bL27 from Aeromonas salmonicida (strain A449).